Reading from the N-terminus, the 514-residue chain is Probable outer membrane protein pmp12 (514 aa).

Residues 1–21 (MTILRNFLTCSALFLALPAAA) form the signal peptide.

Belongs to the PMP outer membrane protein family.

Its subcellular location is the secreted. It is found in the cell wall. It localises to the cell outer membrane. The sequence is that of Probable outer membrane protein pmp12 (pmp12) from Chlamydia pneumoniae (Chlamydophila pneumoniae).